A 489-amino-acid polypeptide reads, in one-letter code: Glycogen synthase (489 aa).

Arginine 20 is a binding site for ADP-alpha-D-glucose.

The protein belongs to the glycosyltransferase 1 family. Bacterial/plant glycogen synthase subfamily.

It catalyses the reaction [(1-&gt;4)-alpha-D-glucosyl](n) + ADP-alpha-D-glucose = [(1-&gt;4)-alpha-D-glucosyl](n+1) + ADP + H(+). It functions in the pathway glycan biosynthesis; glycogen biosynthesis. Functionally, synthesizes alpha-1,4-glucan chains using ADP-glucose. In Chlorobium phaeobacteroides (strain DSM 266 / SMG 266 / 2430), this protein is Glycogen synthase.